Reading from the N-terminus, the 567-residue chain is Malate synthase (567 aa).

The active-site Proton acceptor is the Arg177. The Proton donor role is filled by Asp466. Positions Cys565–Leu567 match the Microbody targeting signal motif.

Belongs to the malate synthase family.

The protein resides in the glyoxysome. The catalysed reaction is glyoxylate + acetyl-CoA + H2O = (S)-malate + CoA + H(+). It participates in carbohydrate metabolism; glyoxylate cycle; (S)-malate from isocitrate: step 2/2. The chain is Malate synthase from Oryza sativa subsp. japonica (Rice).